A 325-amino-acid chain; its full sequence is Probable 2-ketogluconate reductase (325 aa).

NAD(+)-binding positions include 158 to 159 (RI), threonine 211, 238 to 240 (ISR), and aspartate 264. Arginine 240 is a catalytic residue. Glutamate 269 is a catalytic residue. Histidine 288 acts as the Proton donor in catalysis. Residue 288–291 (HIGS) participates in NAD(+) binding.

The protein belongs to the D-isomer specific 2-hydroxyacid dehydrogenase family.

It catalyses the reaction D-gluconate + NADP(+) = 2-dehydro-D-gluconate + NADPH + H(+). This chain is Probable 2-ketogluconate reductase (yvcT), found in Bacillus subtilis (strain 168).